The following is a 182-amino-acid chain: Large ribosomal subunit protein uL16 (182 aa).

The protein belongs to the universal ribosomal protein uL16 family.

This is Large ribosomal subunit protein uL16 from Thermococcus gammatolerans (strain DSM 15229 / JCM 11827 / EJ3).